A 2316-amino-acid polypeptide reads, in one-letter code: Receptor-type tyrosine-protein phosphatase zeta (2316 aa).

The N-terminal stretch at 1–24 is a signal peptide; it reads MRILQSFLACVQLLCVCRLDWAYG. The Extracellular segment spans residues 25–1637; it reads YYRQQRKLVE…LAEGLESEKK (1613 aa). The Alpha-carbonic anhydrase domain occupies 36–300; sequence IGWSYTGALN…KFSRQVFSSY (265 aa). Disulfide bonds link cysteine 56/cysteine 240 and cysteine 133/cysteine 264. 7 N-linked (GlcNAc...) asparagine glycosylation sites follow: asparagine 105, asparagine 134, asparagine 223, asparagine 232, asparagine 324, asparagine 381, and asparagine 497. The Fibronectin type-III domain occupies 314–413; the sequence is EPENVQADPE…LIVDMPTEDA (100 aa). Disordered regions lie at residues 433 to 499 and 518 to 537; these read YGKG…LNTS and LPSQIGTNLPPHSVEGTSAS. N-linked (GlcNAc...) asparagine glycosylation occurs at asparagine 552. Phosphoserine occurs at positions 572 and 576. 2 disordered regions span residues 586 to 624 and 636 to 720; these read KLDSGADDSSGSSPASSTVPFSTDNLSHGYTSSSDTPEA and RNAL…EMPH. Low complexity predominate over residues 592 to 602; sequence DDSSGSSPASS. Serine 595 is a glycosylation site (O-linked (Xyl...) (chondroitin sulfate) serine). The segment covering 603 to 621 has biased composition (polar residues); the sequence is TVPFSTDNLSHGYTSSSDT. N-linked (GlcNAc...) asparagine glycosylation occurs at asparagine 610. Serine 645 bears the Phosphoserine; alternate mark. A glycan (O-linked (Xyl...) (chondroitin sulfate) serine; alternate) is linked at serine 645. Serine 647 is subject to Phosphoserine. A compositionally biased stretch (polar residues) spans 666-675; it reads TDLTTQSETG. The N-linked (GlcNAc...) asparagine glycan is linked to asparagine 685. Over residues 699–711 the composition is skewed to polar residues; that stretch reads ETFSPDATASRGP. N-linked (GlcNAc...) asparagine glycosylation is present at asparagine 786. An O-linked (Xyl...) (chondroitin sulfate) serine glycan is attached at serine 1005. Residues asparagine 1025 and asparagine 1058 are each glycosylated (N-linked (GlcNAc...) asparagine). 4 disordered regions span residues 1141 to 1172, 1204 to 1228, 1401 to 1521, and 1545 to 1622; these read QASGDTWLKPGLSTNSEPALSDTASSEVSHPS, KTALPSGPRDPVLTETPMVEQSSSS, LLPS…DGRE, and TSDE…NSSH. Positions 1152–1172 are enriched in polar residues; the sequence is LSTNSEPALSDTASSEVSHPS. The segment covering 1401 to 1413 has biased composition (polar residues); that stretch reads LLPSKATSKPTHS. The segment covering 1425 to 1439 has biased composition (acidic residues); sequence EDGDDYDDDDYDDID. N-linked (GlcNAc...) asparagine glycosylation occurs at asparagine 1463. The span at 1464–1478 shows a compositional bias: polar residues; sequence DSDTQESSLVDQSDP. 2 O-linked (Xyl...) (chondroitin sulfate) serine glycosylation sites follow: serine 1550 and serine 1552. Composition is skewed to polar residues over residues 1555–1569 and 1595–1609; these read GTSDSLNDNETSTDF and PRSSTPSVTSGHSGV. Asparagine 1563 carries N-linked (GlcNAc...) asparagine glycosylation. Positions 1610 to 1621 are enriched in low complexity; that stretch reads SNSSEAEASNSS. N-linked (GlcNAc...) asparagine glycosylation is found at asparagine 1611 and asparagine 1619. A helical membrane pass occupies residues 1638-1663; the sequence is AVIPLVIVSALTFICLVVLVGILIYW. At 1664–2316 the chain is on the cytoplasmic side; the sequence is RKCFQTAHFY…NIAESLESLV (653 aa). Threonine 1685 and threonine 1688 each carry phosphothreonine. 2 consecutive Tyrosine-protein phosphatase domains span residues 1718-1993 and 2024-2283; these read FTEE…LVEA and LEKQ…VLSL. Residues aspartate 1902, 1934-1940, and glutamine 1978 each bind substrate; that span reads CSAGVGR. Cysteine 1934 serves as the catalytic Phosphocysteine intermediate. Serine 2056 is subject to Phosphoserine.

It belongs to the protein-tyrosine phosphatase family. Receptor class 5 subfamily. Interacts with tenascin. Interacts with N-CAM and NG-CAM. The carbonic-anhydrase like domain interacts with CNTN1 (contactin). Interacts with PTN. Interaction with PTN promotes formation of homooligomers; oligomerization impairs phosphatase activity. Interacts (via chondroitin sulfate chains) with MDK (via C-terminal); this interaction is inhibited by PTN; this interaction promotes neuronal migration. In terms of tissue distribution, nervous tissue specific.

Its subcellular location is the cell membrane. The protein localises to the secreted. The catalysed reaction is O-phospho-L-tyrosyl-[protein] + H2O = L-tyrosyl-[protein] + phosphate. In terms of biological role, protein tyrosine phosphatase that negatively regulates oligodendrocyte precursor proliferation in the embryonic spinal cord. Required for normal differentiation of the precursor cells into mature, fully myelinating oligodendrocytes. May play a role in protecting oligondendrocytes against apoptosis. May play a role in the establishment of contextual memory, probably via the dephosphorylation of proteins that are part of important signaling cascades. Isoform 3 (phosphacan), previously designated 3F8 chondroitin sulfate proteoglycan or 3H1 keratan sulfate proteoglycan depending on the glycosylation status, is a soluble nervous tissue-specific proteoglycan. It is synthesized by glia and binds to neurons and to the neural cell adhesion molecules tenascin, N-CAM or NG-CAM but not to laminin and fibronectin. Phosphacan acts as a potent inhibitor of cell adhesion and neurite outgrowth. The sequence is that of Receptor-type tyrosine-protein phosphatase zeta (Ptprz1) from Rattus norvegicus (Rat).